The sequence spans 313 residues: MRIREGHLINDSAEGPIGLRTRLMGYIGLTKPRVIELLLVTTIPAMLLADRGTVDPLLIINTLVGGLLAAAGANTLNCVADADIDKKMKRTERRALARATVPRSHALIFGLTLSVASFFWLWSTTNMLSAHLAGATIAFYVLVYTLLLKRRTSQNVVWGGAAGCMPVMIGWSAVTGTIQWPALVMFLIIFFWTPPHTWALAMRYKEDYEAAGVPMLPVVATEQQVTKQILVYTWLTVLATLALALTTGWLYASVAILAGTWFLVMAHQLYAGVKRGEAVKPLRLFLQSNNYLAVVFVALAVDSALALPTLLHV.

8 consecutive transmembrane segments (helical) span residues 34 to 54 (VIELLLVTTIPAMLLADRGTV), 56 to 76 (PLLIINTLVGGLLAAAGANTL), 105 to 125 (HALIFGLTLSVASFFWLWSTT), 128 to 148 (LSAHLAGATIAFYVLVYTLLL), 152 to 172 (TSQNVVWGGAAGCMPVMIGWS), 173 to 193 (AVTGTIQWPALVMFLIIFFWT), 237 to 257 (VLATLALALTTGWLYASVAIL), and 291 to 311 (YLAVVFVALAVDSALALPTLL).

This sequence belongs to the UbiA prenyltransferase family. Protoheme IX farnesyltransferase subfamily.

It localises to the cell membrane. It carries out the reaction heme b + (2E,6E)-farnesyl diphosphate + H2O = Fe(II)-heme o + diphosphate. The protein operates within porphyrin-containing compound metabolism; heme O biosynthesis; heme O from protoheme: step 1/1. Functionally, converts heme B (protoheme IX) to heme O by substitution of the vinyl group on carbon 2 of heme B porphyrin ring with a hydroxyethyl farnesyl side group. The polypeptide is Protoheme IX farnesyltransferase (Mycolicibacterium gilvum (strain PYR-GCK) (Mycobacterium gilvum (strain PYR-GCK))).